The primary structure comprises 3184 residues: Probable serine/threonine-protein kinase pats1 (3184 aa).

Residues 369–378 show a composition bias toward pro residues; it reads DPPPPPPSNS. 2 disordered regions span residues 369–516 and 913–1013; these read DPPP…QIPP and SITR…TSIL. Over residues 379 to 415 the composition is skewed to low complexity; the sequence is SPPISKSTSNNNLNVSNYHNNNNNNNNSNSNLSNSGN. Residues 421–450 are compositionally biased toward polar residues; the sequence is DFQSQNLVKSYNRENSGNSLNSMLHQTSLP. The span at 451–512 shows a compositional bias: low complexity; that stretch reads NNNNSNVVNN…NNNNSNNNNS (62 aa). The Myotubularin phosphatase domain maps to 842–1348; it reads CFPDHSLLQE…FQDTMWNEYF (507 aa). The span at 913–934 shows a compositional bias: polar residues; that stretch reads SITRATSPEDQNNGSSNYLLTP. The segment covering 935 to 993 has biased composition (low complexity); it reads NSPNSSSSNLANNNNSNNNNINNNNNNNNNNNNNNNNNSNNNNNNNNNNNNNNNNNNNN. Residues 1000-1013 show a composition bias toward polar residues; the sequence is SRSTTIDNGQTSIL. 13 LRR repeats span residues 1391–1412, 1416–1438, 1439–1460, 1467–1488, 1491–1512, 1514–1535, 1541–1563, 1564–1585, 1587–1608, 1610–1631, 1633–1654, 1656–1678, and 1680–1701; these read FLET…STLY, GLRE…SSLV, KLEK…TVVL, SLTE…FSMF, SLKK…LGML, NLIE…GVGI, KLCI…GDLK, SLEK…FRQL, NLEE…VCFL, NLKK…ISQL, KLMI…IGQL, QLVS…MGLL, and NLVE…IVSL. The 195-residue stretch at 1716-1910 folds into the Roc domain; it reads GQEQCYKMKL…EKLEALVQSQ (195 aa). A small GTPase-like region spans residues 1716–1910; the sequence is GQEQCYKMKL…EKLEALVQSQ (195 aa). GTP is bound by residues 1729–1736, 1797–1801, and 1854–1857; these read GQENVGKT, DFAGQ, and THLD. Residues 1918–2127 enclose the COR domain; the sequence is PRSYMLLENL…KCYWKNGMIL (210 aa). Residues 2247 to 2519 form the Protein kinase domain; sequence LMIEELIGEG…RLIKIAEAMF (273 aa). Residues 2253–2261 and lysine 2274 each bind ATP; that span reads IGEGGAALV. Catalysis depends on aspartate 2379, which acts as the Proton acceptor. Disordered stretches follow at residues 2528-2609 and 2652-2671; these read YQQQ…TISH and NSIN…NSLL. Over residues 2529–2555 the composition is skewed to low complexity; the sequence is QQQQQQQQQQQQSSPSKSSSTSPIIKS. Residues 2556 to 2576 are compositionally biased toward polar residues; that stretch reads LNLSTVSELGESSNQTPKQNI. 5 WD repeats span residues 2745-2785, 2790-2829, 2909-2947, 2949-2986, and 2990-3040; these read PNQG…KYIQ, ANKD…KIKS, AHER…HTIE, AHSS…LVSE, and KHKD…NSRS. The segment covering 3055-3126 has biased composition (low complexity); it reads GSSNSITNSN…NYYYSNNVNS (72 aa). The disordered stretch occupies residues 3055–3164; it reads GSSNSITNSN…TPPGSKGLMQ (110 aa). Polar residues predominate over residues 3141 to 3157; the sequence is HEQTSPNSATPLSSTPP.

This sequence belongs to the protein kinase superfamily. TKL Ser/Thr protein kinase family. ROCO subfamily.

It carries out the reaction L-seryl-[protein] + ATP = O-phospho-L-seryl-[protein] + ADP + H(+). The enzyme catalyses L-threonyl-[protein] + ATP = O-phospho-L-threonyl-[protein] + ADP + H(+). May act as a serine/threonine-protein kinase and guanine-nucleotide releasing factor. Essential regulator of cytokinesis involved in the binding to actomyosin cytoskeleton. The protein is Probable serine/threonine-protein kinase pats1 (pats1) of Dictyostelium discoideum (Social amoeba).